A 620-amino-acid chain; its full sequence is Probable potassium transport system protein Kup 1 (620 aa).

A run of 12 helical transmembrane segments spans residues Leu10–Leu30, Val50–Ile70, Met102–Ile122, Leu138–Lys158, Phe168–Val188, Met211–Tyr231, Trp246–Leu266, Met284–Ile304, Ile336–Phe356, Ile368–Met388, Trp393–Ala413, and Ile415–Val435.

This sequence belongs to the HAK/KUP transporter (TC 2.A.72) family.

Its subcellular location is the cell inner membrane. It catalyses the reaction K(+)(in) + H(+)(in) = K(+)(out) + H(+)(out). Its function is as follows. Transport of potassium into the cell. Likely operates as a K(+):H(+) symporter. The protein is Probable potassium transport system protein Kup 1 of Rhodopseudomonas palustris (strain BisB18).